The sequence spans 287 residues: Ribosomal RNA small subunit methyltransferase A (287 aa).

Residues asparagine 28, leucine 30, glycine 55, glutamate 76, aspartate 101, and asparagine 125 each coordinate S-adenosyl-L-methionine.

The protein belongs to the class I-like SAM-binding methyltransferase superfamily. rRNA adenine N(6)-methyltransferase family. RsmA subfamily.

The protein localises to the cytoplasm. It catalyses the reaction adenosine(1518)/adenosine(1519) in 16S rRNA + 4 S-adenosyl-L-methionine = N(6)-dimethyladenosine(1518)/N(6)-dimethyladenosine(1519) in 16S rRNA + 4 S-adenosyl-L-homocysteine + 4 H(+). Specifically dimethylates two adjacent adenosines (A1518 and A1519) in the loop of a conserved hairpin near the 3'-end of 16S rRNA in the 30S particle. May play a critical role in biogenesis of 30S subunits. This Alkaliphilus oremlandii (strain OhILAs) (Clostridium oremlandii (strain OhILAs)) protein is Ribosomal RNA small subunit methyltransferase A.